The following is a 101-amino-acid chain: Small ribosomal subunit protein uS14 (101 aa).

Residues 1 to 11 (MAKKSAIETNE) show a composition bias toward basic and acidic residues. A disordered region spans residues 1–24 (MAKKSAIETNERRRKLSQSKAAKR). Residues 12–24 (RRRKLSQSKAAKR) show a composition bias toward basic residues.

The protein belongs to the universal ribosomal protein uS14 family. As to quaternary structure, part of the 30S ribosomal subunit. Contacts proteins S3 and S10.

Functionally, binds 16S rRNA, required for the assembly of 30S particles and may also be responsible for determining the conformation of the 16S rRNA at the A site. This chain is Small ribosomal subunit protein uS14, found in Azorhizobium caulinodans (strain ATCC 43989 / DSM 5975 / JCM 20966 / LMG 6465 / NBRC 14845 / NCIMB 13405 / ORS 571).